A 205-amino-acid chain; its full sequence is NADH-quinone oxidoreductase subunit C (205 aa).

Belongs to the complex I 30 kDa subunit family. In terms of assembly, NDH-1 is composed of 14 different subunits. Subunits NuoB, C, D, E, F, and G constitute the peripheral sector of the complex.

Its subcellular location is the cell inner membrane. It carries out the reaction a quinone + NADH + 5 H(+)(in) = a quinol + NAD(+) + 4 H(+)(out). NDH-1 shuttles electrons from NADH, via FMN and iron-sulfur (Fe-S) centers, to quinones in the respiratory chain. The immediate electron acceptor for the enzyme in this species is believed to be ubiquinone. Couples the redox reaction to proton translocation (for every two electrons transferred, four hydrogen ions are translocated across the cytoplasmic membrane), and thus conserves the redox energy in a proton gradient. This is NADH-quinone oxidoreductase subunit C from Bartonella bacilliformis (strain ATCC 35685 / KC583 / Herrer 020/F12,63).